We begin with the raw amino-acid sequence, 267 residues long: Tryptophan synthase alpha chain (267 aa).

Catalysis depends on proton acceptor residues glutamate 49 and aspartate 60.

Belongs to the TrpA family. In terms of assembly, tetramer of two alpha and two beta chains.

It carries out the reaction (1S,2R)-1-C-(indol-3-yl)glycerol 3-phosphate + L-serine = D-glyceraldehyde 3-phosphate + L-tryptophan + H2O. Its pathway is amino-acid biosynthesis; L-tryptophan biosynthesis; L-tryptophan from chorismate: step 5/5. Its function is as follows. The alpha subunit is responsible for the aldol cleavage of indoleglycerol phosphate to indole and glyceraldehyde 3-phosphate. The sequence is that of Tryptophan synthase alpha chain from Salinispora tropica (strain ATCC BAA-916 / DSM 44818 / JCM 13857 / NBRC 105044 / CNB-440).